We begin with the raw amino-acid sequence, 343 residues long: NADH-ubiquinone oxidoreductase chain 2 (343 aa).

8 consecutive transmembrane segments (helical) span residues Met-1 to Thr-21, Tyr-59 to Thr-81, Thr-96 to Pro-116, Asn-150 to Leu-170, Leu-178 to Pro-198, Ile-200 to Asn-220, Met-241 to Met-261, and Leu-270 to Leu-290.

Belongs to the complex I subunit 2 family.

The protein resides in the mitochondrion inner membrane. It carries out the reaction a ubiquinone + NADH + 5 H(+)(in) = a ubiquinol + NAD(+) + 4 H(+)(out). Core subunit of the mitochondrial membrane respiratory chain NADH dehydrogenase (Complex I) that is believed to belong to the minimal assembly required for catalysis. Complex I functions in the transfer of electrons from NADH to the respiratory chain. The immediate electron acceptor for the enzyme is believed to be ubiquinone. The chain is NADH-ubiquinone oxidoreductase chain 2 (MT-ND2) from Lycodon semicarinatus (Ryukyu odd-tooth snake).